The chain runs to 182 residues: Ribosome maturation factor RimM (182 aa).

The PRC barrel domain maps to 102 to 182 (EEGDYYWKDL…SIEVDWDPGF (81 aa)).

It belongs to the RimM family. In terms of assembly, binds ribosomal protein uS19.

Its subcellular location is the cytoplasm. An accessory protein needed during the final step in the assembly of 30S ribosomal subunit, possibly for assembly of the head region. Essential for efficient processing of 16S rRNA. May be needed both before and after RbfA during the maturation of 16S rRNA. It has affinity for free ribosomal 30S subunits but not for 70S ribosomes. In Escherichia fergusonii (strain ATCC 35469 / DSM 13698 / CCUG 18766 / IAM 14443 / JCM 21226 / LMG 7866 / NBRC 102419 / NCTC 12128 / CDC 0568-73), this protein is Ribosome maturation factor RimM.